The primary structure comprises 41 residues: uncharacterized protein (41 aa).

The signal sequence occupies residues 1 to 23; it reads MNFLMRAIFSLLLLFTLSIPVIS.

This is an uncharacterized protein from Escherichia coli (strain K12).